The sequence spans 230 residues: uncharacterized protein (230 aa).

Residues 17–37 (AGALSLGIGFFALASALWFLI) traverse the membrane as a helical segment. N126 is a glycosylation site (N-linked (GlcNAc...) asparagine).

Its subcellular location is the membrane. This is an uncharacterized protein from Mus musculus (Mouse).